The primary structure comprises 87 residues: Sec-independent protein translocase protein TatA (87 aa).

Residues 1-21 (MGGMSITHWIVVAVVVMIFFG) traverse the membrane as a helical segment. The segment at 40-87 (KKGMSEDDTTPPAAPPAPAPRLENQPLPPENTTQNVAQNVPNDIKNNQ) is disordered. The segment covering 69–87 (ENTTQNVAQNVPNDIKNNQ) has biased composition (polar residues).

This sequence belongs to the TatA/E family. The Tat system comprises two distinct complexes: a TatABC complex, containing multiple copies of TatA, TatB and TatC subunits, and a separate TatA complex, containing only TatA subunits. Substrates initially bind to the TatABC complex, which probably triggers association of the separate TatA complex to form the active translocon.

Its subcellular location is the cell inner membrane. In terms of biological role, part of the twin-arginine translocation (Tat) system that transports large folded proteins containing a characteristic twin-arginine motif in their signal peptide across membranes. TatA could form the protein-conducting channel of the Tat system. In Zymomonas mobilis subsp. mobilis (strain ATCC 31821 / ZM4 / CP4), this protein is Sec-independent protein translocase protein TatA.